Here is a 626-residue protein sequence, read N- to C-terminus: Mitogen-activated protein kinase kinase kinase 3 (626 aa).

The PB1 domain maps to 44 to 123; it reads DVRIKFEHNG…KSLRILLLSQ (80 aa). Composition is skewed to polar residues over residues 146 to 155, 165 to 174, and 219 to 232; these read QSAGDINTIY, LSVSSQNPGR, and SAEN…QSLD. Disordered stretches follow at residues 146–184 and 218–262; these read QSAG…YVPE and SSAE…SDRE. Serine 147 is modified (phosphoserine). Serine 166 carries the post-translational modification Phosphoserine; by SGK1. Phosphoserine is present on residues serine 250 and serine 312. Serine 337 carries the post-translational modification Phosphoserine; by SGK1. Serine 340 carries the post-translational modification Phosphoserine. The region spanning 362–622 is the Protein kinase domain; sequence WRRGKLLGQG…AEELLTHHFA (261 aa). ATP is bound by residues 368–376 and lysine 391; that span reads LGQGAFGRV. The Proton acceptor role is filled by aspartate 489.

It belongs to the protein kinase superfamily. STE Ser/Thr protein kinase family. MAP kinase kinase kinase subfamily. As to quaternary structure, binds both upstream activators and downstream substrates in multimolecular complexes. Part of a complex with MAP2K3, RAC1 and CCM2. Interacts with MAP2K5 and SPAG9. Requires Mg(2+) as cofactor. Phosphorylation at Ser-166 and Ser-337 by SGK1 inhibits its activity.

The enzyme catalyses L-seryl-[protein] + ATP = O-phospho-L-seryl-[protein] + ADP + H(+). The catalysed reaction is L-threonyl-[protein] + ATP = O-phospho-L-threonyl-[protein] + ADP + H(+). Activated by phosphorylation on Thr-530. Its function is as follows. Component of a protein kinase signal transduction cascade. Mediates activation of the NF-kappa-B, AP1 and DDIT3 transcriptional regulators. This chain is Mitogen-activated protein kinase kinase kinase 3 (MAP3K3), found in Homo sapiens (Human).